The following is a 439-amino-acid chain: Glutamate-1-semialdehyde 2,1-aminomutase (439 aa).

Residue Lys270 is modified to N6-(pyridoxal phosphate)lysine.

It belongs to the class-III pyridoxal-phosphate-dependent aminotransferase family. HemL subfamily. In terms of assembly, homodimer. The cofactor is pyridoxal 5'-phosphate.

It localises to the cytoplasm. It carries out the reaction (S)-4-amino-5-oxopentanoate = 5-aminolevulinate. It participates in porphyrin-containing compound metabolism; protoporphyrin-IX biosynthesis; 5-aminolevulinate from L-glutamyl-tRNA(Glu): step 2/2. This is Glutamate-1-semialdehyde 2,1-aminomutase from Kocuria rhizophila (strain ATCC 9341 / DSM 348 / NBRC 103217 / DC2201).